A 3966-amino-acid chain; its full sequence is Histone-lysine N-methyltransferase 2A (3966 aa).

Disordered stretches follow at residues 1–106 (MAHS…LLRV) and 130–231 (VFGE…GVKI). The Menin-binding motif (MBM) motif lies at 6-25 (RWRFPARPGTTGGGGGGGRR). Positions 15 to 29 (TTGGGGGGGRRGLGG) are enriched in gly residues. The span at 75 to 102 (GAAAASAASSSSASSSSSSSSSASSGPA) shows a compositional bias: low complexity. An Integrase domain-binding motif 1 (IBM1) motif is present at residues 121 to 132 (GTNLRRFRAVFG). 2 positions are modified to phosphoserine; by CK2: serine 134 and serine 140. Residues 145–150 (QFLGFG) carry the Integrase domain-binding motif 2 (IBM2) motif. Position 151 is a phosphoserine (serine 151). The a.T hook 1 DNA-binding region spans 167 to 178 (KASPRKPRGRPR). Phosphoserine is present on serine 195. Over residues 200–218 (SETKSADKIKKKDSKSIEK) the composition is skewed to basic and acidic residues. Positions 215–225 (SIEKKRGRPPT) form a DNA-binding region, a.T hook 2. At lysine 237 the chain carries N6-acetyllysine. The a.T hook 3 DNA-binding region spans 299 to 307 (RRRGRPPST). Residues 322 to 343 (LEKPQKVRKDKEGTPPLTKEDK) form a disordered region. Lysine 371 is modified (N6-acetyllysine). The segment at 440–590 (RLESTPNSRF…PWLMPPTIPL (151 aa)) is disordered. Residues 450–489 (SATSCGSSEKSSAASQHSSQMSSDSSRSSSPSIDTTSDSQ) are compositionally biased toward low complexity. Serine 516 is modified (phosphoserine). A compositionally biased stretch (low complexity) spans 544–557 (LPTLQSAPQQQTSS). A compositionally biased stretch (pro residues) spans 558-571 (SPPPPLLTPPPPLQ). Position 634 is an N6-acetyllysine (lysine 634). Serine 678 carries the phosphoserine modification. Disordered regions lie at residues 711–943 (ESVT…ADVA), 963–1003 (RGNL…TSSI), 1034–1064 (IEKSKSLKQTDQPKAQGQESDSSETSVRGPR), and 1101–1161 (ILSS…CQVP). 2 stretches are compositionally biased toward low complexity: residues 717–730 (SNRTSSGASSSGVS) and 760–790 (LSTSELSPLTPPSSVSSSLSIPVSPLAASAL). Composition is skewed to polar residues over residues 791–806 (NPTFTFPSHSLTQSGE) and 817–830 (QTSALAEPFSSNSP). At threonine 837 the chain carries Phosphothreonine. Over residues 843–887 (EKGRKKDTAPEELSKDRDADKSVEKDKSRERDREREKENKRESRK) the composition is skewed to basic and acidic residues. Phosphoserine is present on serine 923. The segment covering 989 to 1003 (SAPSSSTVKHSTSSI) has biased composition (low complexity). Positions 1040–1059 (LKQTDQPKAQGQESDSSETS) are enriched in polar residues. A Phosphoserine modification is found at serine 1053. Residues 1101-1111 (ILSSMGNDDKS) show a composition bias toward basic and acidic residues. Lysine 1127 carries the post-translational modification N6-acetyllysine. Residues 1144-1192 (KKGRRSRRCGQCPGCQVPEDCGICTNCLDKPKFGGRNIKKQCCKMRKCQ) form a CXXC-type zinc finger. The Zn(2+) site is built by cysteine 1152, cysteine 1155, cysteine 1158, cysteine 1164, cysteine 1167, cysteine 1170, cysteine 1186, and cysteine 1191. The segment at 1196–1390 (WMPSKASLQK…PLSNGISSKQ (195 aa)) is disordered. A compositionally biased stretch (basic and acidic residues) spans 1217–1229 (SKTTEKKESKEST). A compositionally biased stretch (low complexity) spans 1230–1241 (AVKSPLEPAQKA). N6-acetyllysine is present on lysine 1232. Positions 1245–1270 (PREEPAPKKSSSEPPPRKPVEEKSEE) are enriched in basic and acidic residues. The span at 1369–1390 (KQENAGTLNILNPLSNGISSKQ) shows a compositional bias: polar residues. 3 PHD-type zinc fingers span residues 1430–1481 (RVVC…CKFC), 1478–1532 (CKFC…CVRC), and 1565–1629 (GNFC…CTER). The interaction with histone H3K4me3 stretch occupies residues 1583–1599 (KMMQCGKCDRWVHSKCE). The Bromo domain occupies 1637–1767 (ALEKELQASL…SFFIRQMERV (131 aa)). Disordered regions lie at residues 1665 to 1714 (YRQA…EGVK) and 1807 to 1870 (WQER…PGID). The segment covering 1828 to 1849 (APKPKGPGEPDSPTPLHPPTPP) has biased composition (pro residues). Serine 1839 bears the Phosphoserine mark. Threonine 1847 is modified (phosphothreonine). Residue serine 1860 is modified to Phosphoserine. The C2HC pre-PHD-type zinc-finger motif lies at 1872–1912 (NRQCALCLMYGDDSANDAGRLLYIGQNEWTHVNCALWSAEV). The PHD-type 4 zinc finger occupies 1933 to 1980 (LRCEFCQKPGATVGCCLTSCTSNYHFMCSRAKNCVFLDDKKVYCQRHR). Residues 2020-2076 (NIHMMIGSMTIDCLGILNDLSDCEDKLFPIGYQCSRVYWSTTDARKRCVYTCKIMEC) form the FYR N-terminal domain. The residue at position 2100 (serine 2100) is a Phosphoserine. The interval 2147 to 2174 (RTPSYSPTQRSPGCRPLPSAGSPTPTTH) is disordered. A Phosphothreonine modification is found at threonine 2148. Residues serine 2152 and serine 2202 each carry the phosphoserine modification. Disordered stretches follow at residues 2214-2339 (VRTG…ATPG), 2371-2619 (RGQR…SARA), 2639-2673 (EDIPFYSNSTGKKRGKRSAEGQVDGADDLSTSDED), and 2709-2759 (KISQ…DAGE). Low complexity predominate over residues 2218-2230 (SAYSRSSVSSVPS). Polar residues-rich tracts occupy residues 2250-2284 (LSSSANLGHSAPPSSSSQRTVGGSKTSHLDGSSPS) and 2308-2320 (TSSSKSTDGSAHS). Composition is skewed to basic and acidic residues over residues 2411–2422 (ILHEHIGSSSRD) and 2430–2440 (SSKETCKEKHS). The span at 2498-2509 (GQSTQVEGSSKE) shows a compositional bias: polar residues. Residue lysine 2524 forms a Glycyl lysine isopeptide (Lys-Gly) (interchain with G-Cter in SUMO2) linkage. Positions 2528-2537 (ENQSKNTQKE) are enriched in polar residues. Position 2560 is a phosphoserine (serine 2560). Over residues 2569 to 2588 (PSPNNTLSQDPQSNNYQNLP) the composition is skewed to polar residues. At serine 2607 the chain carries Phosphoserine. The segment covering 2609-2618 (KRRYPRRSAR) has biased composition (basic residues). Acidic residues predominate over residues 2663 to 2673 (GADDLSTSDED). The segment covering 2722–2737 (SDTSVTATSRKSSQIP) has biased composition (polar residues). Basic and acidic residues predominate over residues 2740-2759 (NGKENGTENLKIDRPEDAGE). Position 2792 is a phosphoserine (serine 2792). The 9aaTAD signature appears at 2843–2851 (SDIMDFVLK). Serine 2951 is modified (phosphoserine). Position 2954 is an N6-acetyllysine (lysine 2954). Disordered regions lie at residues 2958–3060 (ITEK…NAAV) and 3164–3239 (AAQS…PSNI). A compositionally biased stretch (polar residues) spans 3012-3025 (HGNSQDLTRNSGTP). Position 3032 is a phosphoserine (serine 3032). Polar residues predominate over residues 3035-3060 (VPVQNQKYVPSSTDSPGPSQISNAAV). Positions 3167–3178 (SSFPPNISSPPS) are enriched in low complexity. A compositionally biased stretch (polar residues) spans 3196–3212 (EANQRTDLTTTVATPSS). Residues 3214 to 3229 (LKKRPISRLHTRKNKK) show a composition bias toward basic residues. At threonine 3369 the chain carries Phosphothreonine. Lysine 3459 carries the post-translational modification N6-acetyllysine. A disordered region spans residues 3462–3640 (TLTSQRDRDP…AMEEEESGFS (179 aa)). The segment covering 3475–3487 (PGTQPSNFTQTAE) has biased composition (polar residues). Over residues 3501-3528 (PSAKPASSASPGSSPSSGQQSGSSSVPG) the composition is skewed to low complexity. Serine 3510 and serine 3523 each carry phosphoserine. Over residues 3558–3570 (TSSEAHIPHRDTD) the composition is skewed to basic and acidic residues. The 82-residue stretch at 3663-3744 (KKGLVFEISS…KHCRNYKFRF (82 aa)) folds into the FYR C-terminal domain. A WDR5 interaction motif (WIN) motif is present at residues 3759 to 3764 (GSARAE). Positions 3782 to 3805 (HRQPPEYNPNDEEEEEVQLKSARR) are disordered. The SET domain occupies 3826–3942 (EAVGVYRSPI…RGEELTYDYK (117 aa)). Positions 3836 and 3838 each coordinate S-adenosyl-L-methionine. Cysteine 3879 is subject to S-methylcysteine; by autocatalysis. S-adenosyl-L-methionine-binding positions include tyrosine 3880 and 3903–3904 (NH). Zn(2+)-binding residues include cysteine 3906 and cysteine 3954. The Post-SET domain occupies 3950–3966 (NKLPCNCGAKKCRKFLN). Residue asparagine 3955 participates in S-adenosyl-L-methionine binding. Residues cysteine 3956 and cysteine 3961 each contribute to the Zn(2+) site.

Belongs to the class V-like SAM-binding methyltransferase superfamily. Histone-lysine methyltransferase family. TRX/MLL subfamily. In terms of assembly, MLL cleavage product N320 heterodimerizes with MLL cleavage product C180 (via SET and FYRC domains). Component of some MLL1/MLL complex, at least composed of the core components KMT2A/MLL1, ASH2L, HCFC1/HCF1, HCFC2, WDR5, DPY30 and RBBP5, as well as the facultative components BACC1, CHD8, E2F6, HSP70, INO80C, KANSL1, LAS1L, MAX, MCRS1, MEN1, MGA, KAT8/MOF, PELP1, PHF20, PRP31, RING2, RUVB1/TIP49A, RUVB2/TIP49B, SENP3, TAF1, TAF4, TAF6, TAF7, TAF9 and TEX10. Interacts (via WIN motif) with WDR5; the interaction is direct. Interaction with WDR5 is required for stable interaction with ASH2L and RBBP5, and thereby also for optimal histone methyltransferase activity. Interacts with KAT8/MOF; the interaction is direct. Interacts with SBF1 and PPP1R15A. Interacts with ZNF335. Interacts with CLOCK and BMAL1 in a circadian manner. Interacts with PPIE; this results in decreased histone H3 methyltransferase activity. Interacts with CREBBP. Interacts with the WRAD complex composed of WDR5, RBBP5, ASH2L and DPY30. Interacts (via MBM motif) with MEN1. Interacts (via IBM motifs) with PSIP1 (via IBD domain) with moderate affinity whereas the KMT2A-MEN1 complex interacts with a greater affinity; MEN1 enhances interaction of KMT2A with PSIP1. Phosphorylation increases its affinity for PSIP1. Forms a complex with CREBBP and CREB1. Post-translationally, proteolytic cleavage by TASP1 generates MLL cleavage 3product N320 and MLL cleavage product C180, which reassemble through a non-covalent association. 2 cleavage sites exist, cleavage site 1 (CS1) and cleavage site 2 (CS2), to generate MLL cleavage products N320 and C180. CS2 is the major site. Phosphorylation increases its interaction with PSIP1. In terms of processing, auto-methylated at Cys-3879: auto-methylation is inhibited by the WRAD complex and unmodified histone H3.

The protein resides in the nucleus. It carries out the reaction L-lysyl(4)-[histone H3] + S-adenosyl-L-methionine = N(6)-methyl-L-lysyl(4)-[histone H3] + S-adenosyl-L-homocysteine + H(+). The enzyme catalyses N(6)-methyl-L-lysyl(4)-[histone H3] + S-adenosyl-L-methionine = N(6),N(6)-dimethyl-L-lysyl(4)-[histone H3] + S-adenosyl-L-homocysteine + H(+). It catalyses the reaction L-cysteinyl-[protein] + S-adenosyl-L-methionine = S-methyl-L-cysteinyl-[protein] + S-adenosyl-L-homocysteine + H(+). Its function is as follows. Histone methyltransferase that plays an essential role in early development and hematopoiesis. Catalytic subunit of the MLL1/MLL complex, a multiprotein complex that mediates both methylation of 'Lys-4' of histone H3 (H3K4me) complex and acetylation of 'Lys-16' of histone H4 (H4K16ac). Catalyzes methyl group transfer from S-adenosyl-L-methionine to the epsilon-amino group of 'Lys-4' of histone H3 (H3K4) via a non-processive mechanism. Part of chromatin remodeling machinery predominantly forms H3K4me1 and H3K4me2 methylation marks at active chromatin sites where transcription and DNA repair take place. Has weak methyltransferase activity by itself, and requires other component of the MLL1/MLL complex to obtain full methyltransferase activity. Has no activity toward histone H3 phosphorylated on 'Thr-3', less activity toward H3 dimethylated on 'Arg-8' or 'Lys-9', while it has higher activity toward H3 acetylated on 'Lys-9'. Binds to unmethylated CpG elements in the promoter of target genes and helps maintain them in the nonmethylated state. Required for transcriptional activation of HOXA9. Promotes PPP1R15A-induced apoptosis. Plays a critical role in the control of circadian gene expression and is essential for the transcriptional activation mediated by the CLOCK-BMAL1 heterodimer. Establishes a permissive chromatin state for circadian transcription by mediating a rhythmic methylation of 'Lys-4' of histone H3 (H3K4me) and this histone modification directs the circadian acetylation at H3K9 and H3K14 allowing the recruitment of CLOCK-BMAL1 to chromatin. Also has auto-methylation activity on Cys-3879 in absence of histone H3 substrate. The protein is Histone-lysine N-methyltransferase 2A (Kmt2a) of Mus musculus (Mouse).